The chain runs to 1169 residues: Polyamine-transporting ATPase 13A2 (1169 aa).

At 1–44 the chain is on the cytoplasmic side; that stretch reads MSADSSLLMGSTPPSYGTLTTGTSIDPLSSSASSVRLSGYCGSP. Residues 45–65 lie within the membrane without spanning it; it reads WRAIGYHAAVWMLAGIPWLLF. At 66–225 the chain is on the cytoplasmic side; sequence RWKPLWGVRL…ISIPVKSYLQ (160 aa). A helical membrane pass occupies residues 226–246; it reads LLADEALNPYYGFQAFSIALW. At 247–250 the chain is on the lumenal side; sequence LADH. Residues 251–271 traverse the membrane as a helical segment; the sequence is YYWYALCIFLISAISICLALY. Residues 272–422 are Cytoplasmic-facing; it reads KTRKQSLTLR…SFKFYKHSMK (151 aa). A helical membrane pass occupies residues 423-443; it reads FVAALSVLALLGTVYSIIILY. Over 444–458 the chain is Lumenal; the sequence is RNRVPVREIVIRALD. A helical membrane pass occupies residues 459 to 479; that stretch reads LVTVVVPPALPAAMTVCTLYA. At 480-919 the chain is on the cytoplasmic side; sequence QSRLRTQGIF…REGRCSLDTS (440 aa). Asp508 serves as the catalytic 4-aspartylphosphate intermediate. Mg(2+)-binding residues include Asp867 and Asp871. Residues 920–940 form a helical membrane-spanning segment; sequence FSVFKYMALYSLTQFISVLIL. The Lumenal portion of the chain corresponds to 941–946; the sequence is YTINTN. A helical membrane pass occupies residues 947–967; it reads LGDLQFLAIDLVITTTVAVLM. Residues 968–993 are Cytoplasmic-facing; the sequence is SRTGPALTLVRARPPGALLSVPVLGS. A helical membrane pass occupies residues 994–1014; sequence LLLQVALVAGIQLGGYFLVIA. The Lumenal segment spans residues 1015 to 1037; the sequence is QPWFVPLNRTVPAPDNLPNYENT. Residue Asn1022 is glycosylated (N-linked (GlcNAc...) asparagine). Residues 1038–1058 traverse the membrane as a helical segment; that stretch reads VVFSLSGFQYLILAAAVSKGA. At 1059 to 1069 the chain is on the cytoplasmic side; it reads PFRQPLYTNVP. A helical transmembrane segment spans residues 1070-1090; sequence FLVALALLGSVLVGLILVPGL. Topologically, residues 1091–1106 are lumenal; the sequence is LQGPLGLRNIVDSSFK. A helical membrane pass occupies residues 1107–1127; that stretch reads LLLLGLVAFNFVGAFMLESVL. The Cytoplasmic segment spans residues 1128 to 1169; that stretch reads DQCLPACLRWLRPKRASKKQFKRLQQELAEHPWPTLPVGSVR.

It belongs to the cation transport ATPase (P-type) (TC 3.A.3) family. Type V subfamily. Interacts with MYCBP2; the interaction inhibits the ubiquitination of TSC2 by MYCBP2. Interacts with HDAC6; the interaction results in recruitment of HDAC6 to lysosomes to promote CTTN deacetylation. In terms of processing, autophosphorylated. Accumulates in an inactive autophosphorylated state and autophosphorylation is stimulated by phosphatidic acid and phosphatidylinositol 3,5-bisphosphate but not by Mn(2+) or Zn(2+). The presence of spermine results in a dose-dependent reduction in autophosphorylation.

The protein resides in the lysosome membrane. It is found in the late endosome membrane. The protein localises to the endosome. Its subcellular location is the multivesicular body membrane. It localises to the cytoplasmic vesicle. The protein resides in the autophagosome membrane. It carries out the reaction spermidine(out) + ATP + H2O = spermidine(in) + ADP + phosphate + H(+). The catalysed reaction is spermine(out) + ATP + H2O = spermine(in) + ADP + phosphate + H(+). Its activity is regulated as follows. Accumulates in an inactive autophosphorylated state. The presence of spermine results in a dose-dependent reduction in autophosphorylation. Its function is as follows. ATPase which acts as a lysosomal polyamine exporter with high affinity for spermine. Also stimulates cellular uptake of polyamines and protects against polyamine toxicity. Plays a role in intracellular cation homeostasis and the maintenance of neuronal integrity. Contributes to cellular zinc homeostasis. Confers cellular protection against Mn(2+) and Zn(2+) toxicity and mitochondrial stress. Required for proper lysosomal and mitochondrial maintenance. Regulates the autophagy-lysosome pathway through the control of SYT11 expression at both transcriptional and post-translational levels. Facilitates recruitment of deacetylase HDAC6 to lysosomes to deacetylate CTTN, leading to actin polymerization, promotion of autophagosome-lysosome fusion and completion of autophagy. Promotes secretion of exosomes as well as secretion of SCNA via exosomes. Plays a role in lipid homeostasis. This Mus musculus (Mouse) protein is Polyamine-transporting ATPase 13A2.